A 208-amino-acid polypeptide reads, in one-letter code: MTPACEARLDAGLAELGLEVDATARERLLALLALLHKWNRAYNLTAVRDPEQMVTRHLLDSASVATAVRGPRLLDVGAGAGLPGLVLAILDPSLEVTMLDGNGKKVRFQRQAVLELGLENVTPVQARVEHFTTRDFDQIVSRAFAQLATFVELTRPLLAEGGEWLAMKGRDAASELAELPPDVTLIERRDLEVPGDAAQRVLLRLRRA.

S-adenosyl-L-methionine contacts are provided by residues Gly-77, Leu-82, Val-128 to Glu-129, and Arg-142.

It belongs to the methyltransferase superfamily. RNA methyltransferase RsmG family.

It localises to the cytoplasm. It catalyses the reaction guanosine(527) in 16S rRNA + S-adenosyl-L-methionine = N(7)-methylguanosine(527) in 16S rRNA + S-adenosyl-L-homocysteine. Functionally, specifically methylates the N7 position of guanine in position 527 of 16S rRNA. The polypeptide is Ribosomal RNA small subunit methyltransferase G (Chromohalobacter salexigens (strain ATCC BAA-138 / DSM 3043 / CIP 106854 / NCIMB 13768 / 1H11)).